Reading from the N-terminus, the 153-residue chain is Interleukin-4 (153 aa).

Residues 1–24 (MGLTSQLLPPLFFLLACAGNFVHG) form the signal peptide. Disulfide bonds link C27-C151, C48-C89, and C70-C123. N62 carries N-linked (GlcNAc...) asparagine glycosylation.

Belongs to the IL-4/IL-13 family.

The protein localises to the secreted. Its function is as follows. Participates in at least several B-cell activation processes as well as of other cell types. It is a costimulator of DNA-synthesis. It induces the expression of class II MHC molecules on resting B-cells. It enhances both secretion and cell surface expression of IgE and IgG1. It also regulates the expression of the low affinity Fc receptor for IgE (CD23) on both lymphocytes and monocytes. Positively regulates IL31RA expression in macrophages. Stimulates autophagy in dendritic cells by interfering with mTORC1 signaling and through the induction of RUFY4. The protein is Interleukin-4 (IL4) of Macaca fascicularis (Crab-eating macaque).